Here is a 287-residue protein sequence, read N- to C-terminus: Agamous-like MADS-box protein AGL53 (287 aa).

One can recognise an MADS-box domain in the interval 30-78; it reads STAKKTTNLSMREQTMFKKALELSTLCNIDVCVIYYGRDGKLIKTWPED. A disordered region spans residues 151–171; the sequence is EFGQTRAVSSTTNPLSPPPSL.

Interacts with MEE14/CBP1.

The protein resides in the nucleus. In terms of biological role, probable transcription factor that may function in the maintenance of the proper function of the central cell in pollen tube attraction. The protein is Agamous-like MADS-box protein AGL53 of Arabidopsis thaliana (Mouse-ear cress).